A 155-amino-acid chain; its full sequence is Small ribosomal subunit protein uS7 (155 aa).

It belongs to the universal ribosomal protein uS7 family. Part of the 30S ribosomal subunit. Contacts proteins S9 and S11.

Its function is as follows. One of the primary rRNA binding proteins, it binds directly to 16S rRNA where it nucleates assembly of the head domain of the 30S subunit. Is located at the subunit interface close to the decoding center, probably blocks exit of the E-site tRNA. The chain is Small ribosomal subunit protein uS7 from Halorhodospira halophila (strain DSM 244 / SL1) (Ectothiorhodospira halophila (strain DSM 244 / SL1)).